A 295-amino-acid chain; its full sequence is Hydroxyquinol 1,2-dioxygenase (295 aa).

The Fe cation site is built by Tyr-165, Tyr-200, His-224, and His-226.

This sequence belongs to the intradiol ring-cleavage dioxygenase family. It depends on Fe(3+) as a cofactor.

It catalyses the reaction benzene-1,2,4-triol + O2 = maleylacetate + 2 H(+). It functions in the pathway aromatic compound metabolism. Functionally, involved in the gamma-resorcylate (2,6-dihydroxybenzoate) catabolism. Catalyzes the conversion of hydroxyquinol to malelylacetate. This Rhizobium sp. (strain MTP-10005) protein is Hydroxyquinol 1,2-dioxygenase.